An 81-amino-acid polypeptide reads, in one-letter code: Cytotoxin I-like T-15 (81 aa).

Residues 1–21 form the signal peptide; that stretch reads MKTLLLTLVVVTIVCLDLGYT. Intrachain disulfides connect Cys24–Cys42, Cys35–Cys59, Cys63–Cys74, and Cys75–Cys80.

The protein belongs to the three-finger toxin family. Short-chain subfamily. Type IA cytotoxin sub-subfamily. As to quaternary structure, monomer in solution; Homodimer and oligomer in the presence of negatively charged lipids forming a pore with a size ranging between 20 and 30 Angstroms. In terms of tissue distribution, expressed by the venom gland.

The protein resides in the secreted. It is found in the target cell membrane. Functionally, shows cytolytic activity on many different cells by forming pore in lipid membranes. In vivo, increases heart rate or kills the animal by cardiac arrest. In addition, it binds to heparin with high affinity, interacts with Kv channel-interacting protein 1 (KCNIP1) in a calcium-independent manner, and binds to integrin alpha-V/beta-3 (ITGAV/ITGB3) with moderate affinity. The protein is Cytotoxin I-like T-15 of Naja atra (Chinese cobra).